A 941-amino-acid polypeptide reads, in one-letter code: Isoleucine--tRNA ligase (941 aa).

Positions 59 to 69 (PYANGNIHIGH) match the 'HIGH' region motif. Position 562 (Glu562) interacts with L-isoleucyl-5'-AMP. The 'KMSKS' region signature appears at 603 to 607 (KMSKS). Lys606 contributes to the ATP binding site. 4 residues coordinate Zn(2+): Cys904, Cys907, Cys924, and Cys927.

The protein belongs to the class-I aminoacyl-tRNA synthetase family. IleS type 1 subfamily. Monomer. Zn(2+) serves as cofactor.

It is found in the cytoplasm. The catalysed reaction is tRNA(Ile) + L-isoleucine + ATP = L-isoleucyl-tRNA(Ile) + AMP + diphosphate. Its function is as follows. Catalyzes the attachment of isoleucine to tRNA(Ile). As IleRS can inadvertently accommodate and process structurally similar amino acids such as valine, to avoid such errors it has two additional distinct tRNA(Ile)-dependent editing activities. One activity is designated as 'pretransfer' editing and involves the hydrolysis of activated Val-AMP. The other activity is designated 'posttransfer' editing and involves deacylation of mischarged Val-tRNA(Ile). The chain is Isoleucine--tRNA ligase from Haemophilus influenzae (strain ATCC 51907 / DSM 11121 / KW20 / Rd).